Reading from the N-terminus, the 432-residue chain is Probable D-serine dehydratase (432 aa).

At Lys112 the chain carries N6-(pyridoxal phosphate)lysine.

The protein belongs to the serine/threonine dehydratase family. DsdA subfamily. Pyridoxal 5'-phosphate is required as a cofactor.

It catalyses the reaction D-serine = pyruvate + NH4(+). This is Probable D-serine dehydratase from Pediococcus pentosaceus (strain ATCC 25745 / CCUG 21536 / LMG 10740 / 183-1w).